The chain runs to 293 residues: 3-methyl-2-oxobutanoate hydroxymethyltransferase (293 aa).

The disordered stretch occupies residues 1 to 29; that stretch reads MTAAHDRSENQPGRPGGETTAPYGSAPRR. Positions 73 and 112 each coordinate Mg(2+). Residues 73–74, Asp112, and Lys142 each bind 3-methyl-2-oxobutanoate; that span reads DS. Glu144 provides a ligand contact to Mg(2+). The active-site Proton acceptor is Glu210.

The protein belongs to the PanB family. Homodecamer; pentamer of dimers. Mg(2+) serves as cofactor.

It localises to the cytoplasm. The catalysed reaction is 3-methyl-2-oxobutanoate + (6R)-5,10-methylene-5,6,7,8-tetrahydrofolate + H2O = 2-dehydropantoate + (6S)-5,6,7,8-tetrahydrofolate. It participates in cofactor biosynthesis; (R)-pantothenate biosynthesis; (R)-pantoate from 3-methyl-2-oxobutanoate: step 1/2. Its function is as follows. Catalyzes the reversible reaction in which hydroxymethyl group from 5,10-methylenetetrahydrofolate is transferred onto alpha-ketoisovalerate to form ketopantoate. The chain is 3-methyl-2-oxobutanoate hydroxymethyltransferase from Saccharopolyspora erythraea (strain ATCC 11635 / DSM 40517 / JCM 4748 / NBRC 13426 / NCIMB 8594 / NRRL 2338).